A 428-amino-acid chain; its full sequence is UPF0229 protein YeaH (428 aa).

Positions G78 to R90 are enriched in basic and acidic residues. The disordered stretch occupies residues G78 to E111. Residues Q92–Q103 show a composition bias toward gly residues.

Belongs to the UPF0229 family.

The protein is UPF0229 protein YeaH of Salmonella paratyphi C (strain RKS4594).